The primary structure comprises 250 residues: Type-1Ab cytolytic delta-endotoxin (250 aa).

The protein belongs to the cyt1/cyt2 endotoxin family. In terms of processing, active after proteolytic processing.

Functionally, kills the larvae of dipteran insects by making pores in the epithelial cell membrane of the insect midgut. The sequence is that of Type-1Ab cytolytic delta-endotoxin (cyt1Ab1) from Bacillus thuringiensis subsp. medellin.